The primary structure comprises 132 residues: UPF0102 protein Ajs_0414 (132 aa).

A disordered region spans residues 1–23 (MGFLGKKVNGSAPARTTRAAGQA).

The protein belongs to the UPF0102 family.

This Acidovorax sp. (strain JS42) protein is UPF0102 protein Ajs_0414.